The following is a 285-amino-acid chain: uncharacterized protein (285 aa).

Disordered regions lie at residues 115–139 (AAGK…QERN) and 152–183 (EHDV…NRGV). Composition is skewed to basic and acidic residues over residues 128-138 (KEADVQTKQER) and 152-170 (EHDV…DLKT).

This is an uncharacterized protein from Escherichia coli (strain K12).